A 276-amino-acid chain; its full sequence is 6-chlorohydroxyquinol 1,2-dioxygenase (276 aa).

Positions 157, 191, 215, and 217 each coordinate Fe cation.

Belongs to the intradiol ring-cleavage dioxygenase family. Requires Fe(3+) as cofactor.

Its pathway is aromatic compound metabolism. The protein operates within xenobiotic degradation. Functionally, involved in the degradation of 2,4,6-trichlorophenol (2,4,6-TCP). May catalyze the oxidation of 6-chlorohydroxyquinol (6-CHQ) to 2-chloromaleylacetate (2-CMA). The chain is 6-chlorohydroxyquinol 1,2-dioxygenase from Cupriavidus pinatubonensis (strain JMP 134 / LMG 1197) (Cupriavidus necator (strain JMP 134)).